Consider the following 308-residue polypeptide: Vomeronasal type-1 receptor 92 (308 aa).

At 1–18 (MNKDNTLHTIMKITMFSE) the chain is on the extracellular side. A helical transmembrane segment spans residues 19–39 (VSVGISANSILFFAHLCMLLG). The Cytoplasmic segment spans residues 40 to 48 (ENRPKPFHL). A helical transmembrane segment spans residues 49 to 69 (YIVSLSLTQLILLITMGLIAV). Over 70–91 (DMFMSWGRWDSTPCQSLIYLHR) the chain is Extracellular. A disulfide bridge links C83 with C170. The chain crosses the membrane as a helical span at residues 92-112 (LLRGFTLCAACLLNVFWMITL). The Cytoplasmic segment spans residues 113–132 (SPRSSCLSKFKHNSPHHISG). The helical transmembrane segment at 133 to 153 (AFLFLCVLYMSFSSHLLVSII) threads the bilayer. Over 154 to 188 (ATPNLTSNIFMYVTQSCSLLPMSYSRTSTFSTTIA) the chain is Extracellular. N-linked (GlcNAc...) asparagine glycosylation occurs at N157. A helical transmembrane segment spans residues 189–209 (IREAFLISLMALSSGFMVTLL). The Cytoplasmic segment spans residues 210–236 (WRHKKQAQHLHSTSLSSKASPERRATR). A helical transmembrane segment spans residues 237–257 (TILLLMSFFVVLYILENVVFY). Over 258 to 267 (SRMKFKDGSM) the chain is Extracellular. The chain crosses the membrane as a helical span at residues 268–288 (FYCVQIIVSHSYATISPFVFI). The Cytoplasmic segment spans residues 289–308 (CTEKHMTKILRSVCTRIINI).

Belongs to the G-protein coupled receptor 1 family.

It is found in the cell membrane. Putative pheromone receptor implicated in the regulation of social as well as reproductive behavior. The sequence is that of Vomeronasal type-1 receptor 92 (Vom1r92) from Rattus norvegicus (Rat).